Reading from the N-terminus, the 132-residue chain is Protamine (132 aa).

Disordered stretches follow at residues 17–46 and 96–115; these read GGKKRRRRRSKRRRSRCGRSRRRKSCRGGR and SMLKKRGRRRRRRSCRRRRR. Basic residues-rich tracts occupy residues 18–46 and 98–115; these read GKKRRRRRSKRRRSRCGRSRRRKSCRGGR and LKKRGRRRRRRSCRRRRR.

The protein belongs to the UPF0771 family. Testis.

It is found in the nucleus. It localises to the chromosome. Functionally, protamines substitute for histones in the chromatin of sperm during the haploid phase of spermatogenesis. They compact sperm DNA into a highly condensed, stable and inactive complex. In Anthonomus grandis (Mexican cotton boll weevil), this protein is Protamine.